The chain runs to 1131 residues: Filamin A-interacting protein 1-like (1131 aa).

A disordered region spans residues 1-62; it reads MRSRSSNAEG…KSHTGKGHHT (62 aa). Basic and acidic residues predominate over residues 50–62; sequence VSEKSHTGKGHHT. Coiled coils occupy residues 139–583 and 610–780; these read NELD…LSKV and SKST…KSLR. Serine 789 carries the post-translational modification Phosphoserine. A phosphothreonine mark is found at threonine 984 and threonine 992. Serine 1050 is modified (phosphoserine).

Belongs to the FILIP1 family.

The protein localises to the cytoplasm. The protein resides in the membrane. Its subcellular location is the nucleus. Acts as a regulator of the antiangiogenic activity on endothelial cells. When overexpressed in endothelial cells, leads to inhibition of cell proliferation and migration and an increase in apoptosis. Inhibits melanoma growth When expressed in tumor-associated vasculature. The polypeptide is Filamin A-interacting protein 1-like (Filip1l) (Mus musculus (Mouse)).